Reading from the N-terminus, the 608-residue chain is MNYLTILLCNRKPTMLSRRNKEKSQHKEGVVGKYMKKDTPPDISVINVWSDQRAKKKSLQRCASTSPSCEFHPRSSSTSRNTYSCTDSQPDYYHARRAQSQMPLQQHSHSHPHSLPHPSHPHVRSHPPLPPHQFRASSNQLSQNSSNYVNFEQIERMRRQQSSPLLQTTSSPAPGAGGFQRSYSTTQRQHHPHLGGDSYDADQGLLSASYANMLQLPQRPHSPAHYAVPPQQQQHPQIHQQHASTPFGSTLRFDRAAMSIRERQPRYQPTSSPMQQQQQQQQQQQQQLQHTQLAAHLGGSYSSDSYPIYENPSRVISMRATQSQRSESPIYSNTTASSATLAVVPQHHHQGHLAVPSGSGGGSLSGSGRGGSSGSVRGASTSVQSLYVPPRTPPSAVAGAGGSANGSLQKVPSQQSLTEPEELPLPPGWATQYTLHGRKYYIDHNAHTTHWNHPLEREGLPVGWRRVVSKMHGTYYENQYTGQSQRQHPCLTSYYVYTTSAEPPKAIRPEASLYAPPTHTHNALVPANPYLLEEIPKWLAVYSEADSSKDHLLQFNMFSLPELEGFDSMLVRLFKQELGTIVGFYERYRRALILEKNRRAGQNQNQNQ.

Disordered regions lie at residues 17-37 (SRRN…YMKK), 64-145 (STSP…SQNS), 157-202 (MRRQ…YDAD), 220-243 (PHSP…QQHA), 264-293 (QPRY…HTQL), and 345-425 (PQHH…ELPL). Over residues 22–37 (EKSQHKEGVVGKYMKK) the composition is skewed to basic and acidic residues. The Ferm-binding motif (FBM) signature appears at 32–38 (GKYMKKD). Over residues 64 to 89 (STSPSCEFHPRSSSTSRNTYSCTDSQ) the composition is skewed to polar residues. A compositionally biased stretch (basic residues) spans 108–125 (SHSHPHSLPHPSHPHVRS). Low complexity-rich tracts occupy residues 160–172 (QQSS…TSSP), 229–242 (PPQQ…HQQH), and 275–289 (QQQQ…QQLQ). Residues 274-294 (MQQQQQQQQQQQQQLQHTQLA) are a coiled coil. Gly residues predominate over residues 358–373 (GSGGGSLSGSGRGGSS). Phosphoserine occurs at positions 413 and 416. WW domains follow at residues 423–456 (LPLP…HPLE) and 458–491 (EGLP…HPCL). The SARAH domain occupies 552 to 599 (LLQFNMFSLPELEGFDSMLVRLFKQELGTIVGFYERYRRALILEKNRR).

In terms of assembly, interacts with Wts via its WW domains. Interacts (via FBM motif) with Mer (via FERM domain). Interacts with Kibra. Interacts with Hpo (via SARAH domain). Interacts with jub. In terms of processing, phosphorylated by Hpo. In terms of tissue distribution, third instar larvae eye disk, expressed in a stripe in the morphogenetic furrow, decreases in the region of the second mitotic wave (SMW) and increases once again posterior to the SMW.

Plays a key role in the Hippo/SWH (Sav/Wts/Hpo) signaling pathway, a signaling pathway that plays a pivotal role in organ size control and tumor suppression by restricting proliferation and promoting apoptosis. The core of this pathway is composed of a kinase cascade wherein Hippo (Hpo), in complex with its regulatory protein Salvador (Sav), phosphorylates and activates Warts (Wts) in complex with its regulatory protein Mats, which in turn phosphorylates and inactivates the Yorkie (Yki) oncoprotein. The Hippo/SWH signaling pathway inhibits the activity of the transcriptional complex formed by Scalloped (sd) and Yki and the target genes of this pathway include cyclin-E (cycE), diap1 and bantam. Required for cell cycle exit in eye imaginal disk and hid-induced apoptotic cell deaths that are part of normal retinal development. Activation of Drice in eye imaginal disk by either Hid or Rpr is almost completely blocked by Sav expression. The polypeptide is Scaffold protein salvador (sav) (Drosophila melanogaster (Fruit fly)).